Here is a 354-residue protein sequence, read N- to C-terminus: Uptake hydrogenase small subunit (354 aa).

Residues 1-44 (MSQLETXYDVMRRQGITRRSFLKYCSLTGRPCLGPTFAPQIAHA) constitute a signal peptide (tat-type signal). C61, C64, C156, C190, H228, S231, C256, and C262 together coordinate [4Fe-4S] cluster. The [3Fe-4S] cluster site is built by C271, C290, and C293.

It belongs to the [NiFe]/[NiFeSe] hydrogenase small subunit family. As to quaternary structure, heterodimer of a large and a small subunit. The cofactor is [4Fe-4S] cluster. [3Fe-4S] cluster is required as a cofactor. In terms of processing, predicted to be exported by the Tat system. The position of the signal peptide cleavage has not been experimentally proven.

Its subcellular location is the cell membrane. The catalysed reaction is H2 + A = AH2. Its function is as follows. This enzyme recycles the H(2) produced by nitrogenase to increase the production of ATP and to protect nitrogenase against inhibition or damage by O(2) under carbon- or phosphate-limited conditions. The polypeptide is Uptake hydrogenase small subunit (hupA) (Azotobacter chroococcum mcd 1).